Consider the following 676-residue polypeptide: Intraflagellar transport protein 81 homolog (676 aa).

The residue at position 2 (Ser-2) is an N-acetylserine. A CH (calponin-homology)-like region region spans residues 2–121; sequence SDQIKFIMDS…LKKRAYLARF (120 aa). Thr-61 is subject to Phosphothreonine. Coiled-coil stretches lie at residues 132 to 258, 306 to 389, 416 to 456, and 490 to 622; these read LQDE…ADAK, HSDL…FDGT, QIIA…KGIS, and VKKL…REKQ.

The protein belongs to the IFT81 family. As to quaternary structure, component of the IFT complex B, at least composed of IFT20, IFT22, IFT25, IFT27, IFT46, IFT52, TRAF3IP1/IFT54, IFT57, IFT74, IFT80, IFT81, and IFT88. Interacts with IFT74; the interaction is direct: within the IFT complex B, IFT74 and IFT81 mediate the transport of tubulin within the cilium. Interacts with tubulin; the interaction is direct. Interacts with IFT57 and IFT70B. Interacts with RABL2/RABL2A; binding is equal in the presence of GTP or GDP. Interacts with IFT88. Interacts (via the IFT74/IFT81 heterodimer) with RABL2B. Interacts with CFAP61. As to expression, highly expressed in testis, moderately in ovary, heart, liver, skeletal muscle, kidney and pancreas, low in prostate, brain, placenta and lung and not detected in spleen, thymus, small intestine and colon. Isoform CDV-1R is abundantly expressed in testis.

The protein resides in the cell projection. It localises to the cilium. It is found in the cytoplasm. The protein localises to the cytoskeleton. Its subcellular location is the cilium basal body. Functionally, component of the intraflagellar transport (IFT) complex B: together with IFT74, forms a tubulin-binding module that specifically mediates transport of tubulin within the cilium. Binds tubulin via its CH (calponin-homology)-like region. Required for ciliogenesis. Required for proper regulation of SHH signaling. Plays an important role during spermatogenesis by modulating the assembly and elongation of the sperm flagella. In Homo sapiens (Human), this protein is Intraflagellar transport protein 81 homolog (IFT81).